Here is a 176-residue protein sequence, read N- to C-terminus: Disulfide bond formation protein B (176 aa).

Residues 1-14 (MLRFLNQCSHGRGA) are Cytoplasmic-facing. A helical membrane pass occupies residues 15–31 (WLLMAFTALALELTALW). Residues 32–49 (FQHVMLLKPCVLCIYERC) lie on the Periplasmic side of the membrane. Residues Cys-41 and Cys-44 are joined by a disulfide bond. Residues 50–65 (ALFGVLGAALIGAIAP) traverse the membrane as a helical segment. The Cytoplasmic portion of the chain corresponds to 66–71 (KTPLRY). A helical transmembrane segment spans residues 72–89 (VAMVIWLYSAFRGVQLTY). Over 90–144 (EHTMLQLYPSPFATCDFMARFPEWLPLDKWVPQVFVASGDCAERQWEFLGLEMPQ) the chain is Periplasmic. A disulfide bond links Cys-104 and Cys-130. A helical membrane pass occupies residues 145–163 (WLLGIFIAYLIVAVLVVIS). Residues 164–176 (QPFKAKKRDLFGR) are Cytoplasmic-facing.

It belongs to the DsbB family.

The protein localises to the cell inner membrane. In terms of biological role, required for disulfide bond formation in some periplasmic proteins. Acts by oxidizing the DsbA protein. The polypeptide is Disulfide bond formation protein B (Escherichia coli O6:K15:H31 (strain 536 / UPEC)).